Reading from the N-terminus, the 868-residue chain is Coatomer subunit gamma (868 aa).

Basic residues predominate over residues 1 to 11 (MWRTKRGRTRR). The disordered stretch occupies residues 1–22 (MWRTKRGRTRRRDAGGNPWQNL). 4 HEAT repeats span residues 64–101 (REAT…IADD), 287–324 (RELS…LHPP), 326–359 (VNVC…GAES), and 360–396 (SVER…KFPR).

It belongs to the COPG family. Oligomeric complex that consists of at least the alpha, beta, beta', gamma, delta, epsilon and zeta subunits.

The protein resides in the cytoplasm. It localises to the golgi apparatus membrane. It is found in the cytoplasmic vesicle. Its subcellular location is the COPI-coated vesicle membrane. The protein localises to the endoplasmic reticulum. Functionally, the coatomer is a cytosolic protein complex that binds to dilysine motifs and reversibly associates with Golgi non-clathrin-coated vesicles, which further mediate biosynthetic protein transport from the ER, via the Golgi up to the trans Golgi network. Coatomer complex is required for budding from Golgi membranes, and is essential for the retrograde Golgi-to-ER transport of dilysine-tagged proteins. This Anopheles gambiae (African malaria mosquito) protein is Coatomer subunit gamma.